Reading from the N-terminus, the 130-residue chain is Holo-[acyl-carrier-protein] synthase (130 aa).

Residues D9 and E58 each coordinate Mg(2+).

The protein belongs to the P-Pant transferase superfamily. AcpS family. Mg(2+) serves as cofactor.

Its subcellular location is the cytoplasm. The catalysed reaction is apo-[ACP] + CoA = holo-[ACP] + adenosine 3',5'-bisphosphate + H(+). Its function is as follows. Transfers the 4'-phosphopantetheine moiety from coenzyme A to a Ser of acyl-carrier-protein. The sequence is that of Holo-[acyl-carrier-protein] synthase from Mycobacterium marinum (strain ATCC BAA-535 / M).